The primary structure comprises 274 residues: Large ribosomal subunit protein uL2 (274 aa).

The tract at residues 223–257 is disordered; sequence VAMNPVDHPHGGGEGRTSGGRHPVTPWGIPTKGYK.

This sequence belongs to the universal ribosomal protein uL2 family. Part of the 50S ribosomal subunit. Forms a bridge to the 30S subunit in the 70S ribosome.

Functionally, one of the primary rRNA binding proteins. Required for association of the 30S and 50S subunits to form the 70S ribosome, for tRNA binding and peptide bond formation. It has been suggested to have peptidyltransferase activity; this is somewhat controversial. Makes several contacts with the 16S rRNA in the 70S ribosome. This is Large ribosomal subunit protein uL2 from Geobacter sulfurreducens (strain ATCC 51573 / DSM 12127 / PCA).